An 834-amino-acid chain; its full sequence is ATP-dependent 6-phosphofructokinase (834 aa).

The N-terminal catalytic PFK domain 1 stretch occupies residues 1 to 426 (MTTTSKIIND…FYEIFIACSN (426 aa)). ATP contacts are provided by residues G62, 123–124 (RS), and 153–156 (GDGS). A Mg(2+)-binding site is contributed by D154. Substrate contacts are provided by residues 199 to 201 (SID), R236, 243 to 245 (MGR), E299, R326, and 332 to 335 (HVQR). Residue D201 is the Proton acceptor of the active site. The interval 427–437 (LHRRKVESKGM) is interdomain linker. A C-terminal regulatory PFK domain 2 region spans residues 438-834 (GVLILHSGGP…DPNVNPQFTL (397 aa)). Residues R507, 566–570 (TIANN), R603, 610–612 (MGA), E666, R692, 698–701 (HLQQ), and R764 contribute to the beta-D-fructose 2,6-bisphosphate site. A disordered region spans residues 799 to 834 (SNLSEQDRPIKKSDISSPTSYSQKTFDPNVNPQFTL). Residues 803-812 (EQDRPIKKSD) show a composition bias toward basic and acidic residues. Over residues 813-834 (ISSPTSYSQKTFDPNVNPQFTL) the composition is skewed to polar residues.

The protein belongs to the phosphofructokinase type A (PFKA) family. ATP-dependent PFK group I subfamily. Eukaryotic two domain clade 'E' sub-subfamily. As to quaternary structure, homotetramer. Requires Mg(2+) as cofactor. The N-terminus is blocked.

Its subcellular location is the cytoplasm. It catalyses the reaction beta-D-fructose 6-phosphate + ATP = beta-D-fructose 1,6-bisphosphate + ADP + H(+). Its pathway is carbohydrate degradation; glycolysis; D-glyceraldehyde 3-phosphate and glycerone phosphate from D-glucose: step 3/4. With respect to regulation, allosterically activated by ADP, AMP, or fructose 2,6-bisphosphate, and allosterically inhibited by ATP or citrate. In terms of biological role, catalyzes the phosphorylation of D-fructose 6-phosphate to fructose 1,6-bisphosphate by ATP, the first committing step of glycolysis. In Dictyostelium discoideum (Social amoeba), this protein is ATP-dependent 6-phosphofructokinase (pfkA).